The primary structure comprises 134 residues: MVKIRLKRAGRKKMPFYQIVAADGRAPRDGKFLEVIGHYNPTAKPHAVTIEKDRVAYWLNVGAQPTATAHSLIRATGLLHEMNLKRRGVSEADIATEMEAWQQREAERRQKRLTAKTRRRQAKKAAEAAGSAEG.

The disordered stretch occupies residues 105-134 (EAERRQKRLTAKTRRRQAKKAAEAAGSAEG). Over residues 109–123 (RQKRLTAKTRRRQAK) the composition is skewed to basic residues.

This sequence belongs to the bacterial ribosomal protein bS16 family.

The sequence is that of Small ribosomal subunit protein bS16 from Chlorobaculum parvum (strain DSM 263 / NCIMB 8327) (Chlorobium vibrioforme subsp. thiosulfatophilum).